We begin with the raw amino-acid sequence, 346 residues long: NADH-ubiquinone oxidoreductase chain 2 (346 aa).

Helical transmembrane passes span 25–45, 60–80, 95–115, 124–144, 149–169, 178–195, 200–219, 247–267, 274–294, and 326–346; these read HWVLAWTGLEINTLAIIPLIS, FLTQAAASALVLFSSMTNAWA, CLLLTAAIAIKLGLVPFHFWF, LMTALLLSTLMKFPPLTLLLM, LNPALLTAMALASTALGGWMG, ILAFSSISHLGWIAIILV, LALLTFYLYTIMTSAVFMAL, VLLSLAGLPPLTGFMPKWLII, EMTPAAMAIAMLSLLSLFFYL, and AILASLSILLLPLSPMVHAIV.

It belongs to the complex I subunit 2 family.

It localises to the mitochondrion inner membrane. The enzyme catalyses a ubiquinone + NADH + 5 H(+)(in) = a ubiquinol + NAD(+) + 4 H(+)(out). In terms of biological role, core subunit of the mitochondrial membrane respiratory chain NADH dehydrogenase (Complex I) that is believed to belong to the minimal assembly required for catalysis. Complex I functions in the transfer of electrons from NADH to the respiratory chain. The immediate electron acceptor for the enzyme is believed to be ubiquinone. In Anas capensis (Cape teal), this protein is NADH-ubiquinone oxidoreductase chain 2 (MT-ND2).